The following is a 661-amino-acid chain: DNA ligase (661 aa).

NAD(+) is bound by residues 31-35 (DKEYD), 79-80 (SL), and Glu-112. Lys-114 serves as the catalytic N6-AMP-lysine intermediate. Positions 135, 169, 281, and 305 each coordinate NAD(+). Positions 398, 401, 414, and 420 each coordinate Zn(2+). The BRCT domain maps to 578–661 (QQENIFLGKT…ISEAEFEAML (84 aa)).

The protein belongs to the NAD-dependent DNA ligase family. LigA subfamily. Requires Mg(2+) as cofactor. The cofactor is Mn(2+).

It carries out the reaction NAD(+) + (deoxyribonucleotide)n-3'-hydroxyl + 5'-phospho-(deoxyribonucleotide)m = (deoxyribonucleotide)n+m + AMP + beta-nicotinamide D-nucleotide.. Its function is as follows. DNA ligase that catalyzes the formation of phosphodiester linkages between 5'-phosphoryl and 3'-hydroxyl groups in double-stranded DNA using NAD as a coenzyme and as the energy source for the reaction. It is essential for DNA replication and repair of damaged DNA. This chain is DNA ligase, found in Alkaliphilus oremlandii (strain OhILAs) (Clostridium oremlandii (strain OhILAs)).